The chain runs to 204 residues: Ribonuclease HII (204 aa).

An RNase H type-2 domain is found at 14–203; it reads VGLCGVDEAG…VRLLLDQTSL (190 aa). 3 residues coordinate a divalent metal cation: D20, E21, and D112.

It belongs to the RNase HII family. Requires Mn(2+) as cofactor. The cofactor is Mg(2+).

It localises to the cytoplasm. It catalyses the reaction Endonucleolytic cleavage to 5'-phosphomonoester.. Functionally, endonuclease that specifically degrades the RNA of RNA-DNA hybrids. In Thiobacillus denitrificans (strain ATCC 25259 / T1), this protein is Ribonuclease HII.